The following is a 377-amino-acid chain: GTPase Obg (377 aa).

An Obg domain is found at Met-1–Leu-159. Residues Asn-127–Glu-148 are disordered. The OBG-type G domain occupies Ala-160 to Asp-336. GTP contacts are provided by residues Gly-166–Ser-173, Phe-191–His-195, Asp-213–Gly-216, Asn-288–Asp-291, and Ser-317–Leu-319. Mg(2+) is bound by residues Ser-173 and Thr-193. The segment at Lys-339–Glu-377 is disordered.

The protein belongs to the TRAFAC class OBG-HflX-like GTPase superfamily. OBG GTPase family. As to quaternary structure, monomer. Mg(2+) is required as a cofactor.

The protein resides in the cytoplasm. In terms of biological role, an essential GTPase which binds GTP, GDP and possibly (p)ppGpp with moderate affinity, with high nucleotide exchange rates and a fairly low GTP hydrolysis rate. Plays a role in control of the cell cycle, stress response, ribosome biogenesis and in those bacteria that undergo differentiation, in morphogenesis control. This Bordetella bronchiseptica (strain ATCC BAA-588 / NCTC 13252 / RB50) (Alcaligenes bronchisepticus) protein is GTPase Obg.